A 57-amino-acid polypeptide reads, in one-letter code: Sec-independent protein translocase protein TatA (57 aa).

Residues 1-21 form a helical membrane-spanning segment; it reads MGISVWQLLIILLIVVMLFGT. The tract at residues 37–57 is disordered; sequence GFRKSVSDGETTTQAEASSRS. A compositionally biased stretch (polar residues) spans 44–57; the sequence is DGETTTQAEASSRS.

Belongs to the TatA/E family. In terms of assembly, the Tat system comprises two distinct complexes: a TatABC complex, containing multiple copies of TatA, TatB and TatC subunits, and a separate TatA complex, containing only TatA subunits. Substrates initially bind to the TatABC complex, which probably triggers association of the separate TatA complex to form the active translocon.

It is found in the cell inner membrane. In terms of biological role, part of the twin-arginine translocation (Tat) system that transports large folded proteins containing a characteristic twin-arginine motif in their signal peptide across membranes. TatA could form the protein-conducting channel of the Tat system. The chain is Sec-independent protein translocase protein TatA from Stutzerimonas stutzeri (Pseudomonas stutzeri).